The primary structure comprises 208 residues: Inner membrane-spanning protein YciB (208 aa).

5 consecutive transmembrane segments (helical) span residues 49-69 (APVL…ILWL), 78-98 (TMLW…IYFH), 105-125 (WKPT…ELVF), 150-170 (FSWV…AFNF), and 178-198 (FKLF…AFFL).

Belongs to the YciB family.

The protein resides in the cell inner membrane. In terms of biological role, plays a role in cell envelope biogenesis, maintenance of cell envelope integrity and membrane homeostasis. This chain is Inner membrane-spanning protein YciB, found in Polaromonas naphthalenivorans (strain CJ2).